We begin with the raw amino-acid sequence, 119 residues long: uncharacterized protein (119 aa).

Cys13 is an active-site residue.

Belongs to the ArsC family.

This is an uncharacterized protein from Escherichia coli (strain K12).